The sequence spans 554 residues: Bifunctional epoxide hydrolase 2 (554 aa).

Residues 1 to 224 form a phosphatase region; it reads MALRVAAFDL…KVTGTQFPEA (224 aa). Mg(2+)-binding residues include D9 and D11. K55 carries the N6-succinyllysine modification. A phosphate-binding site is contributed by 123 to 124; sequence TN. Position 176 is an N6-acetyllysine; alternate (K176). K176 carries the post-translational modification N6-succinyllysine; alternate. A Mg(2+)-binding site is contributed by D185. Residues K191 and K215 each carry the N6-acetyllysine modification. The tract at residues 233–554 is epoxide hydrolase; it reads NDVSHGYVTV…IQNPSVTSKI (322 aa). Positions 257–530 constitute an AB hydrolase-1 domain; that stretch reads PAICLCHGFP…CGHWTQIEKP (274 aa). D333 functions as the Nucleophile in the catalytic mechanism. Phosphoserine is present on S368. Residue Y381 coordinates substrate. K420 and K454 each carry N6-succinyllysine. The Proton donor role is filled by Y465. K504 carries the N6-succinyllysine modification. C521 carries S-(15-deoxy-Delta12,14-prostaglandin J2-9-yl)cysteine lipidation. Residue H523 is the Proton acceptor of the active site. Positions 552–554 match the Microbody targeting signal motif; sequence SKI. K553 carries the N6-succinyllysine modification.

Belongs to the AB hydrolase superfamily. Epoxide hydrolase family. Homodimer. Mg(2+) is required as a cofactor. Post-translationally, the covalent modification of cysteine by 15-deoxy-Delta12,14-prostaglandin-J2 is autocatalytic and reversible. It may occur as an alternative to other cysteine modifications, such as S-nitrosylation and S-palmitoylation.

It localises to the cytoplasm. The protein localises to the peroxisome. The catalysed reaction is an epoxide + H2O = an ethanediol. The enzyme catalyses (9S,10S)-10-hydroxy-9-(phosphooxy)octadecanoate + H2O = (9S,10S)-9,10-dihydroxyoctadecanoate + phosphate. It carries out the reaction 8-hydroxy-(11S,12S)-epoxy-(5Z,9E,14Z)-eicosatrienoate + H2O = (8,11R,12S)-trihydroxy-(5Z,9E,14Z)-eicosatrienoate. It catalyses the reaction 10-hydroxy-(11S,12S)-epoxy- (5Z,8Z,14Z)-eicosatrienoate + H2O = (10,11S,12R)-trihydroxy-(5Z,8Z,14Z)-eicosatrienoate. The catalysed reaction is 12-phosphooxy-(9Z)-octadecenoate + H2O = 12-hydroxy-(9Z)-octadecenoate + phosphate. The enzyme catalyses 12-phosphooxy-(9E)-octadecenoate + H2O = 12-hydroxy-(9E)-octadecenoate + phosphate. It carries out the reaction 12-(phosphooxy)octadecanoate + H2O = 12-hydroxyoctadecanoate + phosphate. It catalyses the reaction 8,9-epoxy-(5Z,11Z,14Z)-eicosatrienoate + H2O = 8,9-dihydroxy-(5Z,11Z,14Z)-eicosatrienoate. The catalysed reaction is 11,12-epoxy-(5Z,8Z,14Z)-eicosatrienoate + H2O = 11,12-dihydroxy-(5Z,8Z,14Z)-eicosatrienoate. The enzyme catalyses 14,15-epoxy-(5Z,8Z,11Z)-eicosatrienoate + H2O = 14,15-dihydroxy-(5Z,8Z,11Z)-eicosatrienoate. It carries out the reaction 9,10-epoxy-(12Z)-octadecenoate + H2O = 9,10-dihydroxy-(12Z)-octadecenoate. It catalyses the reaction 1-tetradecanoyl-sn-glycerol 3-phosphate + H2O = 1-tetradecanoyl-sn-glycerol + phosphate. The catalysed reaction is 1-octadecanoyl-sn-glycero-3-phosphate + H2O = 1-octadecanoyl-sn-glycerol + phosphate. The enzyme catalyses 1-(5Z,8Z,11Z,14Z-eicosatetraenoyl)-sn-glycero-3-phosphate + H2O = 1-(5Z,8Z,11Z,14Z-eicosatetraenoyl)-sn-glycerol + phosphate. It carries out the reaction 1-hexadecanoyl-sn-glycero-3-phosphate + H2O = 1-hexadecanoyl-sn-glycerol + phosphate. It catalyses the reaction 1-(9Z-octadecenoyl)-sn-glycero-3-phosphate + H2O = 1-(9Z-octadecenoyl)-sn-glycerol + phosphate. The catalysed reaction is (8S,9R)-epoxy-(5Z,11Z,14Z)-eicosatrienoate + H2O = (8S,9S)-dihydroxy-(5Z,11Z,14Z)-eicosatrienoate. The enzyme catalyses (11S,12R)-epoxy-(5Z,8Z,14Z)-eicosatrienoate + H2O = (11R,12R)-dihydroxy-(5Z,8Z,14Z)-eicosatrienoate. It carries out the reaction (11S,12R)-epoxy-(5Z,8Z,14Z)-eicosatrienoate + H2O = (11S,12S)-dihydroxy-(5Z,8Z,14Z)-eicosatrienoate. It catalyses the reaction (14S,15R)-epoxy-(5Z,8Z,11Z)-eicosatrienoate + H2O = (14R,15R)-dihydroxy-(5Z,8Z,11Z)-eicosatrienoate. The catalysed reaction is (14S,15R)-epoxy-(5Z,8Z,11Z)-eicosatrienoate + H2O = (14S,15S)-dihydroxy-(5Z,8Z,11Z)-eicosatrienoate. The enzyme catalyses (11R,12S)-epoxy-(5Z,8Z,14Z)-eicosatrienoate + H2O = (11S,12S)-dihydroxy-(5Z,8Z,14Z)-eicosatrienoate. It carries out the reaction (11R,12S)-epoxy-(5Z,8Z,14Z)-eicosatrienoate + H2O = (11R,12R)-dihydroxy-(5Z,8Z,14Z)-eicosatrienoate. It catalyses the reaction (8S,9R)-epoxy-(5Z,11Z,14Z)-eicosatrienoate + H2O = (8R,9R)-dihydroxy-(5Z,11Z,14Z)-eicosatrienoate. The catalysed reaction is (14R,15S)-epoxy-(5Z,8Z,11Z)-eicosatrienoate + H2O = (14R,15R)-dihydroxy-(5Z,8Z,11Z)-eicosatrienoate. With respect to regulation, inhibited by 1-(1-acetylpiperidin-4-yl)-3-(4-(trifl uoromethoxy)phenyl)urea (TPAU), 1-cyclohexyl-3-dodecylurea (CDU), 12-(3-adamantan-1-yl-ureido)-dodecanoic acid (AUDA), 1-((3S, 5S, 7S)-adamantan-1-yl)-3-(5-(2-(2-ethoxyethoxy) ethoxy)pentyl)urea (AEPU), N-adamantyl-N[']-cyclohexyl urea (ACU), 4-(((1S, 4S)-4-(3-((3S, 5S, 7S)-adamantan-1-yl) ureido)cyclohexyl)oxy)benzoic acid (c-AUCB), 4-(((1R, 4R)-4-(3-((3S, 5S, 7S)-adamantan-1-yl)ureido)cyclohexyl)oxy)benzoic acid (t-AUCB), 4-(((1R, 4R)-4-(3-(4(trifluoromethoxy)phenyl)ureido)cyclohexyl)oxy)benzoic acid (t-TAUCB) and to a lesser extent by 8-(3-((3S, 5S, 7S)-adamantan-1-yl)ureido) octanoic acid (AUOA). Phosphatase activity is inhibited by dodecyl-phosphate, phospholipids such as phospho-lysophosphatidic acids and fatty acids such as palmitic acid and lauric acid. Its function is as follows. Bifunctional enzyme. The C-terminal domain has epoxide hydrolase activity and acts on epoxides (alkene oxides, oxiranes) and arene oxides. Plays a role in xenobiotic metabolism by degrading potentially toxic epoxides. Also determines steady-state levels of physiological mediators. The N-terminal domain has lipid phosphatase activity, with the highest activity towards threo-9,10-phosphonooxy-hydroxy-octadecanoic acid, followed by erythro-9,10-phosphonooxy-hydroxy-octadecanoic acid, 12-phosphonooxy-octadec-9Z-enoic acid and 12-phosphonooxy-octadec-9E-enoic acid. Functionally, bifunctional enzyme. The C-terminal domain has epoxide hydrolase activity and acts on epoxides (alkene oxides, oxiranes) and arene oxides. Plays a role in xenobiotic metabolism by degrading potentially toxic epoxides. Also determines steady-state levels of physiological mediators. Bifunctional enzyme. The N-terminal domain has lipid phosphatase activity, with the highest activity towards threo-9,10-phosphonooxy-hydroxy-octadecanoic acid, followed by erythro-9,10-phosphonooxy-hydroxy-octadecanoic acid, 12-phosphonooxy-octadec-9Z-enoic acid and 12-phosphonooxy-octadec-9E-enoic acid. Has phosphatase activity toward lyso-glycerophospholipids with also some lower activity toward lysolipids of sphingolipid and isoprenoid phosphates. The sequence is that of Bifunctional epoxide hydrolase 2 from Rattus norvegicus (Rat).